Here is a 439-residue protein sequence, read N- to C-terminus: Telomeric repeat-binding factor 1 (439 aa).

A disordered region spans residues 1-36 (MAEDVSSAAPSPRGCADGRDADPTEEQMAETERNDE). Alanine 2 bears the N-acetylalanine mark. A Phosphoserine modification is found at serine 11. Acidic residues predominate over residues 23–36 (PTEEQMAETERNDE). The TRFH mediates dimerization stretch occupies residues 58–268 (EEEEEDAGLV…AAAKVVESKR (211 aa)). Residue lysine 213 forms a Glycyl lysine isopeptide (Lys-Gly) (interchain with G-Cter in SUMO2) linkage. Phosphoserine; by ATM is present on serine 219. An interaction with RLIM region spans residues 265–378 (ESKRTRTITS…PVTPEKHRAR (114 aa)). The disordered stretch occupies residues 266–311 (SKRTRTITSQDKPSGNDVEMETEANLDTRKSVSDKQSAVTESSEGT). Residues 299-311 (DKQSAVTESSEGT) are compositionally biased toward polar residues. Residue lysine 325 forms a Glycyl lysine isopeptide (Lys-Gly) (interchain with G-Cter in SUMO2) linkage. A disordered region spans residues 326–375 (LQHGTQQQDLNKKERRVGTPQSTKKKKESRRATESRIPVSKSQPVTPEKH). The Nuclear localization signal signature appears at 337 to 356 (KKERRVGTPQSTKKKKESRR). Lysine 366 participates in a covalent cross-link: Glycyl lysine isopeptide (Lys-Gly) (interchain with G-Cter in SUMO2). Positions 375–432 (HRARKRQAWLWEEDKNLRSGVRKYGEGNWSKILLHYKFNNRTSVMLKDRWRTMKKLKL) constitute an HTH myb-type domain. Residues 403–428 (WSKILLHYKFNNRTSVMLKDRWRTMK) constitute a DNA-binding region (H-T-H motif).

As to quaternary structure, homodimer; can contain both isoforms. Found in a complex with POT1; TINF2 and TNKS1. Interacts with ATM, TINF2, TNKS1, TNKS2, PINX1, NEK2 and MAPRE1. Component of the shelterin complex (telosome) composed of TERF1, TERF2, TINF2, TERF2IP ACD and POT1. Interacts with RLIM (via N-terminus). Interacts with FBXO4. Interaction with TINF2 protects against interaction with FBXO4 and subsequent polyubiquitination and proteasomal degradation. Interacts with GNL3L; this interaction promotes homodimerization. Interacts with TIN2. Interacts with RTEL1. Interactions with GNL3L and TIN2 are mutually exclusive. Interacts with CCDC79/TERB1. Interacts with TRIOBP isoform 1; mediates TERF1 localization to the centrosome. Phosphorylated preferentially on Ser-219 in an ATM-dependent manner in response to ionizing DNA damage. Post-translationally, ADP-ribosylation by TNKS1 or TNKS2 diminishes its ability to bind to telomeric DNA. In terms of processing, ubiquitinated by RLIM/RNF12, leading to its degradation by the proteasome. Ubiquitinated by a SCF (SKP1-CUL1-F-box protein) ubiquitin-protein ligase complex, leading to its degradation by the proteasome. In terms of tissue distribution, highly expressed and ubiquitous. Isoform Pin2 predominates.

It localises to the nucleus. The protein localises to the cytoplasm. Its subcellular location is the cytoskeleton. It is found in the spindle. The protein resides in the chromosome. It localises to the telomere. In terms of biological role, binds the telomeric double-stranded 5'-TTAGGG-3' repeat and negatively regulates telomere length. Involved in the regulation of the mitotic spindle. Component of the shelterin complex (telosome) that is involved in the regulation of telomere length and protection. Shelterin associates with arrays of double-stranded 5'-TTAGGG-3' repeats added by telomerase and protects chromosome ends; without its protective activity, telomeres are no longer hidden from the DNA damage surveillance and chromosome ends are inappropriately processed by DNA repair pathways. This is Telomeric repeat-binding factor 1 (TERF1) from Homo sapiens (Human).